A 360-amino-acid polypeptide reads, in one-letter code: Phospho-N-acetylmuramoyl-pentapeptide-transferase (360 aa).

Transmembrane regions (helical) follow at residues 21–41, 73–93, 94–114, 132–152, 168–188, 199–219, 239–259, 263–283, 288–308, and 338–358; these read YLTF…LWIG, TMGG…WGDL, SNPY…IGFV, WKYF…YALG, IMPQ…VGTS, GLAI…AWAT, LVIF…FNTY, VFMG…IAVL, FLLV…ILQV, and VIIR…VTLK.

This sequence belongs to the glycosyltransferase 4 family. MraY subfamily. Mg(2+) is required as a cofactor.

The protein localises to the cell inner membrane. It catalyses the reaction UDP-N-acetyl-alpha-D-muramoyl-L-alanyl-gamma-D-glutamyl-meso-2,6-diaminopimeloyl-D-alanyl-D-alanine + di-trans,octa-cis-undecaprenyl phosphate = di-trans,octa-cis-undecaprenyl diphospho-N-acetyl-alpha-D-muramoyl-L-alanyl-D-glutamyl-meso-2,6-diaminopimeloyl-D-alanyl-D-alanine + UMP. The protein operates within cell wall biogenesis; peptidoglycan biosynthesis. Functionally, catalyzes the initial step of the lipid cycle reactions in the biosynthesis of the cell wall peptidoglycan: transfers peptidoglycan precursor phospho-MurNAc-pentapeptide from UDP-MurNAc-pentapeptide onto the lipid carrier undecaprenyl phosphate, yielding undecaprenyl-pyrophosphoryl-MurNAc-pentapeptide, known as lipid I. In Mannheimia succiniciproducens (strain KCTC 0769BP / MBEL55E), this protein is Phospho-N-acetylmuramoyl-pentapeptide-transferase.